A 215-amino-acid polypeptide reads, in one-letter code: Cytochrome b6 (215 aa).

Residues 32-52 (IFYCLGGVTLVCFIIQFATGF) traverse the membrane as a helical segment. A heme c-binding site is contributed by C35. Positions 86 and 100 each coordinate heme b. The next 3 membrane-spanning stretches (helical) occupy residues 90-110 (ASMM…TGGF), 116-136 (LTWI…VTGY), and 186-206 (LHTF…FLMI). Residues H187 and H202 each contribute to the heme b site.

It belongs to the cytochrome b family. PetB subfamily. The 4 large subunits of the cytochrome b6-f complex are cytochrome b6, subunit IV (17 kDa polypeptide, PetD), cytochrome f and the Rieske protein, while the 4 small subunits are PetG, PetL, PetM and PetN. The complex functions as a dimer. Heme b serves as cofactor. Requires heme c as cofactor.

The protein localises to the cellular thylakoid membrane. Component of the cytochrome b6-f complex, which mediates electron transfer between photosystem II (PSII) and photosystem I (PSI), cyclic electron flow around PSI, and state transitions. This chain is Cytochrome b6, found in Acaryochloris marina (strain MBIC 11017).